A 279-amino-acid chain; its full sequence is Thioredoxin-like 1-1, chloroplastic (279 aa).

The region spanning Ala56–Pro202 is the Thioredoxin domain. Residues Cys125 and Cys128 each act as nucleophile in the active site. Cys125 and Cys128 form a disulfide bridge.

This sequence belongs to the thioredoxin family.

Its function is as follows. Probable thiol-disulfide oxidoreductase that may participate in various redox reactions. The polypeptide is Thioredoxin-like 1-1, chloroplastic (Oryza sativa subsp. japonica (Rice)).